The primary structure comprises 397 residues: Ethanolaminephosphotransferase 1 (397 aa).

Ala2 carries the post-translational modification N-acetylalanine. The next 10 helical transmembrane spans lie at 47 to 69 (WLAPNLITFSGFLLVVFNFLLMA), 84 to 103 (HVPDWVWIVVGILNFVAYTL), 123 to 145 (LFDHGLDNWSYVYFVVTVYSIFG), 150 to 172 (GVSVFVLYLLLWVVLFSFILSHW), 179 to 201 (ILFLPWGYDISQVTISFVYIVTA), 221 to 243 (LFTAMIIGCALCVTLPMSLLNFF), 256 to 278 (VYEAMVPLFSPCLLFILSTAWIL), 291 to 310 (VFYFMVGTAFANSTCQLIVC), 317 to 339 (CPTLNWLLVPLFLVVLVVNLGVA), and 344 to 366 (SILLYTLTTAFTLAHIHYGVRVV). Residue Sec387 is a non-standard amino acid, selenocysteine.

Belongs to the CDP-alcohol phosphatidyltransferase class-I family. The cofactor is Mg(2+). Mn(2+) serves as cofactor.

Its subcellular location is the endoplasmic reticulum membrane. The catalysed reaction is CDP-ethanolamine + a 1,2-diacyl-sn-glycerol = a 1,2-diacyl-sn-glycero-3-phosphoethanolamine + CMP + H(+). The enzyme catalyses 1-O-alkyl-2-acyl-sn-glycerol + CDP-ethanolamine = a 1-O-alkyl-2-acyl-sn-glycero-3-phosphoethanolamine + CMP + H(+). Its pathway is phospholipid metabolism; phosphatidylethanolamine biosynthesis; phosphatidylethanolamine from ethanolamine: step 3/3. Functionally, ethanolaminephosphotransferase that catalyzes the transfer of phosphoethanolamine (PE) from CDP-ethanolamine to lipid acceptors, the final step in the synthesis of PE via the 'Kennedy' pathway. PE is the second most abundant phospholipid of membranes in mammals and is involved in various membrane-related cellular processes. The enzyme is critical for the synthesis of several PE species and also catalyzes the synthesis of plasmanyl-PE, a lipid required for proper myelination and neurodevelopment, from 1-alkyl-2-acylglycerol. In Pongo abelii (Sumatran orangutan), this protein is Ethanolaminephosphotransferase 1.